Here is an 860-residue protein sequence, read N- to C-terminus: MGVSGSKGQKLFVSVLQRLLSERGLHVKESSAIEFYQFLIKVSPWFPEEGGLNLQDWKRVGREMKKYAAEHGTDSIPKQAYPIWLQLREILTEQSDLVLLSAEAKSVTEEELEEGLTGLLSASSQEKTYGTRGTAYAEIDTEVDKLSEHIYDEPYEEKEKADKNEEKDHVRKVKKIVQRKENSEHKRKEKDQKAFLATDWNNDDLSPEDWDDLEEQAAHYHDDDELILPVKRKVDKKKPLALRRKPLPPVGFAGAMAEAREKGDLTFTFPVVFMGESDDDDTPVWEPLPLKTLKELQSAVRTMGPSAPYTLQVVDMVASQWLTPSDWHQTARATLSPGDYVLWRTEYEEKSKETVQKTAGKRKGKVSLDMLLGTGQFLSPSSQIKLSKDVLKDVTTNAVLAWRAIPPPGVKKTVLAGLKQGNEESYETFISRLEEAVYRMMPRGEGSDILIKQLAWENANSLCQDLIRPMRKTGTMQDYIRACLDASPAVVQGMAYAAAMRGQKYSTFVKQTYGGGKGGQGSEGPVCFSCGKTGHIKRDCKEEKGSKRAPPGLCPRCKKGYHWKSECKSKFDKDGNPLPPLETNAENSKNLVKGQSPSPTQKGDKGKDSGLNPEAPPFTIHDLPRGTPGSAGLDLSSQKDLILSLEDGVSLVPTLVKGTLPEGTTGLIIGRSSNYKKGLEVLPGVIDSDFQGEIKVMVKAAKNAVIIHKGERIAQLLLLPYLKLPNPIIKEERGSEGFGSTSHVHWVQEISDSRPMLHISLNGRRFLGLLDTGADKTCIAGRDWPANWPIHQTESSLQGLGMACGVARSSQPLRWQHEDKSGIIHPFVIPTLPFTLWGRDIMKEIKVRLMTDSPDDSQDL.

Gly-2 carries the N-myristoyl glycine; by host lipid modification. Basic and acidic residues-rich tracts occupy residues 154 to 169 (PYEE…EKDH) and 178 to 193 (QRKE…KDQK). The disordered stretch occupies residues 154 to 193 (PYEEKEKADKNEEKDHVRKVKKIVQRKENSEHKRKEKDQK). The short motif at 305-308 (PSAP) is the PTAP/PSAP motif element. CCHC-type zinc fingers lie at residues 525 to 542 (PVCF…DCKE) and 552 to 569 (GLCP…ECKS). Residues 572 to 631 (DKDGNPLPPLETNAENSKNLVKGQSPSPTQKGDKGKDSGLNPEAPPFTIHDLPRGTPGSA) are disordered. The segment covering 584–601 (NAENSKNLVKGQSPSPTQ) has biased composition (polar residues). A Peptidase A2 domain is found at 766–841 (FLGLLDTGAD…LPFTLWGRDI (76 aa)). The Protease; shared with dimeric partner role is filled by Asp-771.

As to quaternary structure, homodimer; when myristoylated. In terms of assembly, homodimer. NC-dUTPase is a homotrimer. Mg(2+) is required as a cofactor. Post-translationally, released by autocatalytic processing. Myristoylated. Myristoylation of the matrix (MA) domain mediates the transport and binding of Gag polyproteins to the host plasma membrane and is required for the assembly of viral particles. In terms of processing, specific enzymatic cleavages in vivo yield mature proteins.

It localises to the virion. It carries out the reaction dUTP + H2O = dUMP + diphosphate + H(+). Its activity is regulated as follows. Inhibited by pepstatin A. Its function is as follows. Matrix protein. Functionally, nucleocapsid protein p14: Binds strongly to viral nucleic acids and promote their aggregation. Also destabilizes the nucleic acids duplexes via highly structured zinc-binding motifs. Capsid protein. In terms of biological role, NC-dUTPase has dUTPase activity, thereby preventing incorporation of uracil into DNA. Its function is as follows. The aspartyl protease mediates proteolytic cleavages of Gag and Gag-Pol polyproteins during or shortly after the release of the virion from the plasma membrane. Cleavages take place as an ordered, step-wise cascade to yield mature proteins. This process is called maturation. Displays maximal activity during the budding process just prior to particle release from the cell. The sequence is that of Gag-Pro polyprotein (gag-pro) from Mus musculus (Mouse).